The primary structure comprises 315 residues: Cytoplasmic dynein intermediate light chain DYN3 (315 aa).

This sequence belongs to the dynein light intermediate chain DYN3 family. In terms of assembly, the cytoplasmic dynein is composed of at least two heavy chains and a number of intermediate and light chains.

The protein localises to the cytoplasm. The protein resides in the cytoskeleton. Component of the cytoplasmic dynein which acts as a motor for the intracellular retrograde motility of vesicles and organelles along microtubules. May play an important role in the proper orientation of the mitotic spindle into the budding daughter cell yeast. Probably required for normal progression of the cell cycle. The chain is Cytoplasmic dynein intermediate light chain DYN3 (DYN3) from Candida glabrata (strain ATCC 2001 / BCRC 20586 / JCM 3761 / NBRC 0622 / NRRL Y-65 / CBS 138) (Yeast).